The following is a 213-amino-acid chain: Large ribosomal subunit protein uL18c (213 aa).

Belongs to the universal ribosomal protein uL18 family.

The protein resides in the plastid. The protein localises to the apicoplast. The chain is Large ribosomal subunit protein uL18c (RPL18) from Plasmodium falciparum (isolate 3D7).